We begin with the raw amino-acid sequence, 611 residues long: Beta-hexosaminidase (611 aa).

This sequence belongs to the glycosyl hydrolase 20 family. In terms of assembly, homodimer.

Its subcellular location is the periplasm. The catalysed reaction is Hydrolysis of terminal non-reducing N-acetyl-D-hexosamine residues in N-acetyl-beta-D-hexosaminides.. It functions in the pathway glycan degradation; chitin degradation. Its activity is regulated as follows. Inhibited by mercuric ions, PNP-beta-Glc, PNP-beta-Gal, PNP-alpha-GlcNAc, and PNP-beta-S-GlcNAc. Its function is as follows. Hydrolyzes aryl-N-acetyl-beta-D-glucosaminide (aryl-beta-GlcNAc), aryl-beta-GalNAc and chitin oligosaccharides. Can hydrolyze rapidly the artificial substrates p-nitrophenyl-N-acetyl-beta-D-glucosaminide (PNP-beta-GlcNAc) and 4-methylumbelliferyl-beta-GlcNAc, and is slightly active on p-nitrophenyl-beta-GalNAc. This enzyme is not processive, i.e. when it hydrolyzes (GlcNAc)n, both products, (Glc-NAc)n-1 and the terminal GlcNAc, are released before the enzyme attacks a second molecule of (GlcNAc)n or (GlcNAc)n-1. This is Beta-hexosaminidase from Vibrio furnissii.